Consider the following 169-residue polypeptide: Large ribosomal subunit protein uL15 (169 aa).

Residues 20–56 (GRGIGSGKGKTGGRGVKGQKARSGVSIKGFEGGQMPL) form a disordered region. The segment covering 21–35 (RGIGSGKGKTGGRGV) has biased composition (gly residues).

The protein belongs to the universal ribosomal protein uL15 family. Part of the 50S ribosomal subunit.

Functionally, binds to the 23S rRNA. The sequence is that of Large ribosomal subunit protein uL15 from Methylorubrum extorquens (strain CM4 / NCIMB 13688) (Methylobacterium extorquens).